Consider the following 209-residue polypeptide: Ribosomal RNA large subunit methyltransferase E (209 aa).

The S-adenosyl-L-methionine site is built by glycine 63, tryptophan 65, aspartate 83, aspartate 99, and aspartate 124. The active-site Proton acceptor is the lysine 164.

Belongs to the class I-like SAM-binding methyltransferase superfamily. RNA methyltransferase RlmE family.

It is found in the cytoplasm. It catalyses the reaction uridine(2552) in 23S rRNA + S-adenosyl-L-methionine = 2'-O-methyluridine(2552) in 23S rRNA + S-adenosyl-L-homocysteine + H(+). In terms of biological role, specifically methylates the uridine in position 2552 of 23S rRNA at the 2'-O position of the ribose in the fully assembled 50S ribosomal subunit. This Vibrio campbellii (strain ATCC BAA-1116) protein is Ribosomal RNA large subunit methyltransferase E.